The chain runs to 471 residues: Ribulose bisphosphate carboxylase large chain (471 aa).

Substrate is bound by residues N115 and T165. The active-site Proton acceptor is the K167. K169 contributes to the substrate binding site. Mg(2+)-binding residues include K193, D195, and E196. K193 is modified (N6-carboxylysine). H286 functions as the Proton acceptor in the catalytic mechanism. The substrate site is built by R287, H319, and S371.

It belongs to the RuBisCO large chain family. Type I subfamily. Heterohexadecamer of 8 large chains and 8 small chains. Mg(2+) is required as a cofactor.

Its subcellular location is the carboxysome. It catalyses the reaction 2 (2R)-3-phosphoglycerate + 2 H(+) = D-ribulose 1,5-bisphosphate + CO2 + H2O. The catalysed reaction is D-ribulose 1,5-bisphosphate + O2 = 2-phosphoglycolate + (2R)-3-phosphoglycerate + 2 H(+). RuBisCO catalyzes two reactions: the carboxylation of D-ribulose 1,5-bisphosphate, the primary event in carbon dioxide fixation, as well as the oxidative fragmentation of the pentose substrate in the photorespiration process. Both reactions occur simultaneously and in competition at the same active site. The chain is Ribulose bisphosphate carboxylase large chain from Synechococcus sp. (strain WH7803).